The primary structure comprises 478 residues: MDRSLGWQGNSVPEDRTEAGIKRFLEDTTDDGELSKFVKDFSGNESCHPPEAKTWASRPQVPEPRPQAPDLYDDDLEFRPPSWPQSSDNQQYFCAPAPLSPSARPRSPWGKLDPYDSSEDDKEYVGFATLPNQVHRKSVKKGFDFTLMVAGESGLGKSTLVNSLFLTDLYRDRKLLGAEERIMQTVEITKHAVDIEEKGVRLRLTIVDTPGFGDAVNNTECWKPVAEYIDQQFEQYFRDESGLNRKNIQDNRVHCCLYFISPFGHGLRPLDVEFMKALHQRVNIVPILAKADTLTPPEVDRKKRKIREEIEHFGIKIYQFPDCDSDEDEDFKLQDQALKESIPFAVIGSNTVVEARGRRVRGRLYPWGIVEVENPGHCDFVKLRTMLVRTHMQDLKDVTRETHYENYRAQCIQSMTRLVVKERNRNKLTRESGTDLPIPAVPPGTDPETEKLIREKDEELRRMQEMLHKIQKQMKETY.

Residues 38 to 115 form a disordered region; that stretch reads VKDFSGNESC…RSPWGKLDPY (78 aa). The segment covering 95-108 has biased composition (low complexity); sequence APAPLSPSARPRSP. Ser117 and Ser118 each carry phosphoserine. One can recognise a Septin-type G domain in the interval 141 to 414; sequence KGFDFTLMVA…ENYRAQCIQS (274 aa). A G1 motif region spans residues 151 to 158; sequence GESGLGKS. GTP is bound by residues 151 to 158 and Thr185; that span reads GESGLGKS. The G3 motif stretch occupies residues 208–211; that stretch reads DTPG. The G4 motif stretch occupies residues 289-292; it reads AKAD. 290–298 contributes to the GTP binding site; sequence KADTLTPPE. Ser325 is subject to Phosphoserine. Residues Gly348 and Arg363 each contribute to the GTP site. The interval 425 to 448 is disordered; sequence RNKLTRESGTDLPIPAVPPGTDPE. Ser432 carries the post-translational modification Phosphoserine. At Thr434 the chain carries Phosphothreonine. Positions 446–478 form a coiled coil; that stretch reads DPETEKLIREKDEELRRMQEMLHKIQKQMKETY.

This sequence belongs to the TRAFAC class TrmE-Era-EngA-EngB-Septin-like GTPase superfamily. Septin GTPase family. As to quaternary structure, septins polymerize into heterooligomeric protein complexes that form filaments, and can associate with cellular membranes, actin filaments and microtubules. GTPase activity is required for filament formation. Interacts with SEPTIN8. Component of a septin core octameric complex consisting of SEPTIN12, SEPTIN7, SEPTIN6 and SEPTIN2 or SEPTIN4 in the order 12-7-6-2-2-6-7-12 or 12-7-6-4-4-6-7-12. Interacts with SEPTIN14 (via C-terminus). Interacts with DYRK1A. Interacts with SLC6A3/DAT and SNCA/alpha-synuclein. Interacts with STX1A; in the striatum. Interacts with XIAP (via BIR3 domain) following the induction of apoptosis. Interacts with AREL1 (via HECT domain); in the cytoplasm following induction of apoptosis. In terms of processing, ubiquitinated by AREL1. Phosphorylated by DYRK1A.

The protein resides in the cytoplasm. Its subcellular location is the cell projection. It localises to the cilium. The protein localises to the flagellum. It is found in the cytoplasmic vesicle. The protein resides in the secretory vesicle. Its subcellular location is the axon. It localises to the dendrite. The protein localises to the perikaryon. It is found in the synapse. Filament-forming cytoskeletal GTPase. Pro-apoptotic protein involved in LGR5-positive intestinal stem cell and Paneth cell expansion in the intestines, via its interaction with XIAP. May also play a role in the regulation of cell fate in the intestine. Positive regulator of apoptosis involved in hematopoietic stem cell homeostasis; via its interaction with XIAP. Negative regulator of repair and hair follicle regeneration in response to injury, due to inhibition of hair follicle stem cell proliferation, potentially via its interaction with XIAP. Plays an important role in male fertility and sperm motility. During spermiogenesis, essential for the establishment of the annulus (a fibrous ring structure connecting the midpiece and the principal piece of the sperm flagellum) which is a requisite for the structural and mechanical integrity of the sperm. Involved in the migration of cortical neurons and the formation of neuron leading processes during embryonic development. Required for dopaminergic metabolism in presynaptic autoreceptors; potentially via activity as a presynaptic scaffold protein. This is Septin-4 from Pongo abelii (Sumatran orangutan).